Reading from the N-terminus, the 77-residue chain is Translational regulator CsrA (77 aa).

The protein belongs to the CsrA/RsmA family. Homodimer; the beta-strands of each monomer intercalate to form a hydrophobic core, while the alpha-helices form wings that extend away from the core.

Its subcellular location is the cytoplasm. Functionally, a translational regulator that binds mRNA to regulate translation initiation and/or mRNA stability. Usually binds in the 5'-UTR at or near the Shine-Dalgarno sequence preventing ribosome-binding, thus repressing translation. Its main target seems to be the major flagellin gene, while its function is anatagonized by FliW. The protein is Translational regulator CsrA of Pseudarthrobacter chlorophenolicus (strain ATCC 700700 / DSM 12829 / CIP 107037 / JCM 12360 / KCTC 9906 / NCIMB 13794 / A6) (Arthrobacter chlorophenolicus).